Reading from the N-terminus, the 315-residue chain is Tyrosine recombinase XerC (315 aa).

The Core-binding (CB) domain maps to 1–103; the sequence is MITSFYAFLD…AIKSFARFCV (103 aa). Positions 124–306 constitute a Tyr recombinase domain; it reads ELPSPLTYEQ…SMKLKKQIHD (183 aa). Catalysis depends on residues arginine 164, lysine 188, histidine 258, arginine 261, and histidine 284. Tyrosine 293 functions as the O-(3'-phospho-DNA)-tyrosine intermediate in the catalytic mechanism.

This sequence belongs to the 'phage' integrase family. XerC subfamily. Forms a cyclic heterotetrameric complex composed of two molecules of XerC and two molecules of XerD.

Its subcellular location is the cytoplasm. Its function is as follows. Site-specific tyrosine recombinase, which acts by catalyzing the cutting and rejoining of the recombining DNA molecules. The XerC-XerD complex is essential to convert dimers of the bacterial chromosome into monomers to permit their segregation at cell division. It also contributes to the segregational stability of plasmids. This is Tyrosine recombinase XerC from Chlamydia trachomatis serovar L2b (strain UCH-1/proctitis).